A 108-amino-acid polypeptide reads, in one-letter code: Thaicobrin (108 aa).

One can recognise a B30.2/SPRY domain in the interval 1-108; that stretch reads SPPGNWQKAD…IWQKGLWWLG (108 aa).

This sequence belongs to the ohanin/vespryn family. Expressed by the venom gland.

The protein localises to the secreted. Neurotoxin that produces dose-dependent hypolocomotion and hyperalgesia in mice. May directly act on the central nervous system, as it is 6500-fold more potent when administered intracerebroventricularly than intraperitoneal. The protein is Thaicobrin of Naja kaouthia (Monocled cobra).